Reading from the N-terminus, the 263-residue chain is Shikimate dehydrogenase (NADP(+)) (263 aa).

Shikimate is bound by residues 14–16 and T60; that span reads SLS. K64 functions as the Proton acceptor in the catalytic mechanism. Residues N85 and D100 each coordinate shikimate. Residues 123 to 127, 146 to 151, and L205 each bind NADP(+); these read GAGGA and NRTPQR. Y207 is a binding site for shikimate. Residue G228 coordinates NADP(+). Residue Q235 participates in shikimate binding.

The protein belongs to the shikimate dehydrogenase family. In terms of assembly, homodimer.

The enzyme catalyses shikimate + NADP(+) = 3-dehydroshikimate + NADPH + H(+). Its pathway is metabolic intermediate biosynthesis; chorismate biosynthesis; chorismate from D-erythrose 4-phosphate and phosphoenolpyruvate: step 4/7. In terms of biological role, involved in the biosynthesis of the chorismate, which leads to the biosynthesis of aromatic amino acids. Catalyzes the reversible NADPH linked reduction of 3-dehydroshikimate (DHSA) to yield shikimate (SA). This chain is Shikimate dehydrogenase (NADP(+)), found in Thermus thermophilus (strain ATCC 27634 / DSM 579 / HB8).